We begin with the raw amino-acid sequence, 470 residues long: 4-O-methyltransferase 1 (470 aa).

S-adenosyl-L-methionine is bound by residues 274–275 (GG), D297, 328–329 (DC), and K344. H348 (proton acceptor) is an active-site residue.

Belongs to the class I-like SAM-binding methyltransferase superfamily. Cation-independent O-methyltransferase family. COMT subfamily.

Its function is as follows. S-adenosyl-L-methionine-dependent methyltransferase that preferentially catalyzes the methylation of 4-OH phenolic compounds like coniferyl alcohol, vanillyl alcohol and ferrulic acid. May play a role in promoting lignin degradation by methylating and inactivating free-hydroxyl phenolic compounds, products of lignin cleavage which are known inhibitors of lignin peroxidases. The sequence is that of 4-O-methyltransferase 1 from Phanerochaete chrysosporium (strain RP-78 / ATCC MYA-4764 / FGSC 9002) (White-rot fungus).